Reading from the N-terminus, the 138-residue chain is Transcription antitermination protein NusB (138 aa).

The protein belongs to the NusB family.

Involved in transcription antitermination. Required for transcription of ribosomal RNA (rRNA) genes. Binds specifically to the boxA antiterminator sequence of the ribosomal RNA (rrn) operons. This is Transcription antitermination protein NusB from Alkaliphilus oremlandii (strain OhILAs) (Clostridium oremlandii (strain OhILAs)).